The following is a 320-amino-acid chain: o-succinylbenzoate synthase (320 aa).

Lys133 serves as the catalytic Proton donor. Mg(2+) is bound by residues Asp161, Glu190, and Asp213. Lys235 functions as the Proton acceptor in the catalytic mechanism.

This sequence belongs to the mandelate racemase/muconate lactonizing enzyme family. MenC type 1 subfamily. The cofactor is a divalent metal cation.

It carries out the reaction (1R,6R)-6-hydroxy-2-succinyl-cyclohexa-2,4-diene-1-carboxylate = 2-succinylbenzoate + H2O. Its pathway is quinol/quinone metabolism; 1,4-dihydroxy-2-naphthoate biosynthesis; 1,4-dihydroxy-2-naphthoate from chorismate: step 4/7. It participates in quinol/quinone metabolism; menaquinone biosynthesis. Functionally, converts 2-succinyl-6-hydroxy-2,4-cyclohexadiene-1-carboxylate (SHCHC) to 2-succinylbenzoate (OSB). This is o-succinylbenzoate synthase from Salmonella enteritidis PT4 (strain P125109).